A 581-amino-acid chain; its full sequence is Protein phosphatase 2C 70 (581 aa).

Residues 1-7 (MAMIGMN) are Extracellular-facing. Residues 8 to 28 (IIGLFMVLMLLLISLIILFAC) traverse the membrane as a helical segment. At 29 to 581 (KPWRYFSRFR…IIYLDFDTSL (553 aa)) the chain is on the cytoplasmic side. The FHA domain occupies 208 to 259 (VKLGRVSPSDLALKDSEVSGKHAQITWNSTKFKWELVDMGSLNGTLVNSHSI). A PPM-type phosphatase domain is found at 304-577 (KIGVASDPMA…DNTSIIYLDF (274 aa)). Mn(2+) contacts are provided by aspartate 346, glycine 347, aspartate 521, and aspartate 568.

Association of RLK5 with kapp domain is dependent on phosphorylation of RLK5 and can be abolished by dephosphorylation. Interacts with SERK1 and CDC48A. Component of the SERK1 signaling complex, composed of KAPP, CDC48A, GRF6 or GRF7, SERK1, SERK2, SERK3/BAK1 and BRI1. Interacts with CLV1. Requires Mg(2+) as cofactor. Mn(2+) is required as a cofactor. As to expression, expressed in all tissues examined.

The protein localises to the cell membrane. It carries out the reaction O-phospho-L-seryl-[protein] + H2O = L-seryl-[protein] + phosphate. The enzyme catalyses O-phospho-L-threonyl-[protein] + H2O = L-threonyl-[protein] + phosphate. Dephosphorylates the Ser/Thr receptor-like kinase RLK5. May function as a signaling component in a pathway involving RLK5. Binds and dephosphorylates CLAVATA1 (CLV1). Functions as a negative regulator of the CLV1 signaling in plant development. Dephosphorylates SERK1 receptor kinase on threonine residues in the A-loop. Dephosphorylation of SERK1 controls SERK1 internalization. Component of a signaling pathway which mediates adaptation to NaCl stress. Is not a component of the SALT OVERLY SENSITIVE (SOS) pathway. The sequence is that of Protein phosphatase 2C 70 from Arabidopsis thaliana (Mouse-ear cress).